We begin with the raw amino-acid sequence, 220 residues long: Deoxyribose-phosphate aldolase 2 (220 aa).

The Proton donor/acceptor role is filled by Asp89. The Schiff-base intermediate with acetaldehyde role is filled by Lys151. Lys180 serves as the catalytic Proton donor/acceptor.

Belongs to the DeoC/FbaB aldolase family. DeoC type 1 subfamily.

The protein resides in the cytoplasm. It carries out the reaction 2-deoxy-D-ribose 5-phosphate = D-glyceraldehyde 3-phosphate + acetaldehyde. It participates in carbohydrate degradation; 2-deoxy-D-ribose 1-phosphate degradation; D-glyceraldehyde 3-phosphate and acetaldehyde from 2-deoxy-alpha-D-ribose 1-phosphate: step 2/2. In terms of biological role, catalyzes a reversible aldol reaction between acetaldehyde and D-glyceraldehyde 3-phosphate to generate 2-deoxy-D-ribose 5-phosphate. In Staphylococcus aureus (strain N315), this protein is Deoxyribose-phosphate aldolase 2.